A 221-amino-acid chain; its full sequence is 6-phosphogluconate phosphatase (221 aa).

Residue Asp10 is the Nucleophile of the active site. Mg(2+)-binding residues include Asp10, Asp12, and Asp167. 10–12 (DCD) lines the substrate pocket.

It belongs to the HAD-like hydrolase superfamily. CbbY/CbbZ/Gph/YieH family. Mg(2+) serves as cofactor. It depends on Mn(2+) as a cofactor. Co(2+) is required as a cofactor. The cofactor is Zn(2+).

In terms of biological role, catalyzes strongly the dephosphorylation of 6-phosphogluconate (6P-Glu) and slightly the dephosphorylation of dihydroxyacetone phosphate (DHAP) and phosphoenolpyruvate (PEP). Also hydrolyzes both purines (GMP and IMP) and pyrimidines as secondary substrates. The sequence is that of 6-phosphogluconate phosphatase (yieH) from Escherichia coli (strain K12).